Reading from the N-terminus, the 183-residue chain is Holliday junction branch migration complex subunit RuvA (183 aa).

Residues 1-63 (MIVGLIGVVE…EDAHLLYGFL (63 aa)) are domain I. The domain II stretch occupies residues 64–139 (EEGEKILFER…FFIQDENRPA (76 aa)). Residue Ala139 is a region of interest, flexible linker. The interval 139–183 (ARNEVFLALESLGFKSAEINQVLKTLKPNLSIEAAIKEALQQLRS) is domain III.

This sequence belongs to the RuvA family. As to quaternary structure, homotetramer. Forms an RuvA(8)-RuvB(12)-Holliday junction (HJ) complex. HJ DNA is sandwiched between 2 RuvA tetramers; dsDNA enters through RuvA and exits via RuvB. An RuvB hexamer assembles on each DNA strand where it exits the tetramer. Each RuvB hexamer is contacted by two RuvA subunits (via domain III) on 2 adjacent RuvB subunits; this complex drives branch migration. In the full resolvosome a probable DNA-RuvA(4)-RuvB(12)-RuvC(2) complex forms which resolves the HJ.

The protein localises to the cytoplasm. The RuvA-RuvB-RuvC complex processes Holliday junction (HJ) DNA during genetic recombination and DNA repair, while the RuvA-RuvB complex plays an important role in the rescue of blocked DNA replication forks via replication fork reversal (RFR). RuvA specifically binds to HJ cruciform DNA, conferring on it an open structure. The RuvB hexamer acts as an ATP-dependent pump, pulling dsDNA into and through the RuvAB complex. HJ branch migration allows RuvC to scan DNA until it finds its consensus sequence, where it cleaves and resolves the cruciform DNA. This chain is Holliday junction branch migration complex subunit RuvA, found in Helicobacter pylori (strain ATCC 700392 / 26695) (Campylobacter pylori).